The following is a 305-amino-acid chain: Probable GTP 3',8-cyclase (305 aa).

A Radical SAM core domain is found at 6–233 (RHGRPVMSLR…MQDRKKYYID (228 aa)). Position 15 (R15) interacts with GTP. Positions 22 and 26 each coordinate [4Fe-4S] cluster. Position 28 (Y28) interacts with S-adenosyl-L-methionine. C29 contacts [4Fe-4S] cluster. R62 contributes to the GTP binding site. S-adenosyl-L-methionine is bound at residue G66. T92 provides a ligand contact to GTP. Residue S116 participates in S-adenosyl-L-methionine binding. K153 contributes to the GTP binding site. [4Fe-4S] cluster is bound by residues C249 and C252. Position 254-256 (254-256 (RLR)) interacts with GTP. C266 provides a ligand contact to [4Fe-4S] cluster.

This sequence belongs to the radical SAM superfamily. MoaA family. [4Fe-4S] cluster is required as a cofactor.

It catalyses the reaction GTP + AH2 + S-adenosyl-L-methionine = (8S)-3',8-cyclo-7,8-dihydroguanosine 5'-triphosphate + 5'-deoxyadenosine + L-methionine + A + H(+). The protein operates within cofactor biosynthesis; molybdopterin biosynthesis. In terms of biological role, catalyzes the cyclization of GTP to (8S)-3',8-cyclo-7,8-dihydroguanosine 5'-triphosphate. This is Probable GTP 3',8-cyclase from Methanothermobacter thermautotrophicus (strain ATCC 29096 / DSM 1053 / JCM 10044 / NBRC 100330 / Delta H) (Methanobacterium thermoautotrophicum).